The chain runs to 462 residues: Putative endoglucanase type B (462 aa).

The signal sequence occupies residues 1-16; the sequence is MAYKLILAAFAATALA. Residues 25–61 form the CBM1 domain; it reads CSNGVWAQCGGQNWSGTPCCTSGNKCVKLNDFYSQCQ. Disulfide bonds link cysteine 33–cysteine 50 and cysteine 44–cysteine 60. Asparagine 37 is a glycosylation site (N-linked (GlcNAc...) asparagine). The segment covering 64–100 has biased composition (low complexity); the sequence is SAEPSSTAAGPSSTTATKTTATGGSSTTAGGSVTSAP. The tract at residues 64 to 102 is disordered; sequence SAEPSSTAAGPSSTTATKTTATGGSSTTAGGSVTSAPPA. The linker stretch occupies residues 66 to 99; the sequence is EPSSTAAGPSSTTATKTTATGGSSTTAGGSVTSA. The segment at 100–462 is catalytic; it reads PPAASDNPYA…LLDNANPSFL (363 aa). Residue aspartate 190 is part of the active site. A disulfide bridge links cysteine 191 with cysteine 250. N-linked (GlcNAc...) asparagine glycosylation occurs at asparagine 223. Aspartate 236 serves as the catalytic Proton donor. 2 N-linked (GlcNAc...) asparagine glycosylation sites follow: asparagine 272 and asparagine 317. A disulfide bond links cysteine 383 and cysteine 430. Aspartate 416 functions as the Nucleophile in the catalytic mechanism.

It belongs to the glycosyl hydrolase 6 (cellulase B) family.

It catalyses the reaction Endohydrolysis of (1-&gt;4)-beta-D-glucosidic linkages in cellulose, lichenin and cereal beta-D-glucans.. This is Putative endoglucanase type B from Fusarium oxysporum (Fusarium vascular wilt).